Here is a 109-residue protein sequence, read N- to C-terminus: Cell division protein ZapA (109 aa).

Positions 22-99 (EQQDALNMAA…IEQALLEQGR (78 aa)) form a coiled coil.

It belongs to the ZapA family. Type 1 subfamily. In terms of assembly, homodimer. Interacts with FtsZ.

It is found in the cytoplasm. In terms of biological role, activator of cell division through the inhibition of FtsZ GTPase activity, therefore promoting FtsZ assembly into bundles of protofilaments necessary for the formation of the division Z ring. It is recruited early at mid-cell but it is not essential for cell division. The sequence is that of Cell division protein ZapA from Yersinia enterocolitica serotype O:8 / biotype 1B (strain NCTC 13174 / 8081).